The sequence spans 915 residues: MAGEKGGSRDEEREPLTRGSIEFRDSINSFDYSSSTASLSLAVIDRINGSTQDSRLGEKDQRDDDHDQYRNEEEYDVEDADYIPSGGKTVQKTTKIVLWALLFLCVGGWSLAFVIFLFRGHDTPQTSIASEENISSGGARGNRITLDEVLGGEWAPRAHSISWFPGPNGEDGLILEKDNLSATAYLRVEDIVGRKDPKASKKSIVLMQKKMFTVGRETVYSAQAWPSPDLKTVLVLSDQQKNWRHSFTGKYWLFDVETQTGQPLDPGAPDRRIQLASWSPQSDAVVFTRDNNMFLRKLTSNEVATITTDGGVDLFYGVPDWVYEEEVFSGNSATWWASDGDYIAFLRTNESSVPDYPIQYFASRPSGENPKPGEENYPEVREVKYPKAGAPNPIVDLQFYDVGKGEVFSVDVTSEFADDDRLIIEVLWASNGKALVRETNRESDILSIAIIDVLSRTGRIVRREDVNALDGGWVEPTQSTRFIPADPDHGRLDDGYIDTVIYEGRDQLAYFTPLDNPKPIMLTKGHSEVVNAPSGVDLKRGLVYFVVAGNEPWERHIYSVNFDGTSLQPLTNVTESSYYDVSFSNGAGYALLNYRGPKVPWQKVINTPANENSFEAIIEQNDHLSRKLRLFSLESKVYQHVTVDGFSLPVMERRPPNFDPAKKYPVLFHLYGGPGSQTVSKKFSVDFQSYVASTLGYIVVTVDGRGTGHIGRKARCIIRGNLGHYEARDQIETAKKWAAKPYVDESRMAIWGWSYGGFMTLKTLEQDGGRTFQYGMAVAPVTDWRYYDSIYTERYMRTPQHNQGGYDTSAISNTTALASNIRFLLMHGTADDNVHIQNSLTLLDKLDLDDVDNYDVHVFPDSDHSIYFHNAHKMVYNRLGDWLINAFNGEWLKVHKPTPNNSLFRRAETWGGLPV.

2 disordered regions span residues Met1 to Ser20 and Gln52 to Glu74. The Cytoplasmic portion of the chain corresponds to Met1–Lys95. The segment covering Arg55–Glu72 has biased composition (basic and acidic residues). A helical; Signal-anchor for type II membrane protein membrane pass occupies residues Ile96–Phe116. The Vacuolar segment spans residues Leu117 to Val915. N-linked (GlcNAc...) asparagine glycosylation is found at Asn133, Asn179, Asn349, and Asn572. The active-site Charge relay system is the Ser754. The N-linked (GlcNAc...) asparagine glycan is linked to Asn813. Residues Asp831 and His864 each act as charge relay system in the active site. Asn900 carries N-linked (GlcNAc...) asparagine glycosylation.

The protein belongs to the peptidase S9B family.

The protein resides in the vacuole membrane. The catalysed reaction is Release of an N-terminal dipeptide, Xaa-Yaa-|-Zaa-, from a polypeptide, preferentially when Yaa is Pro, provided Zaa is neither Pro nor hydroxyproline.. Functionally, type IV dipeptidyl-peptidase which removes N-terminal dipeptides sequentially from polypeptides having unsubstituted N-termini provided that the penultimate residue is proline. The polypeptide is Probable dipeptidyl-aminopeptidase B (DAPB) (Blastomyces gilchristii (strain SLH14081) (Blastomyces dermatitidis)).